The primary structure comprises 102 residues: PqqA binding protein (102 aa).

It belongs to the PqqD family. In terms of assembly, monomer. Interacts with PqqE.

It functions in the pathway cofactor biosynthesis; pyrroloquinoline quinone biosynthesis. Its function is as follows. Functions as a PqqA binding protein and presents PqqA to PqqE, in the pyrroloquinoline quinone (PQQ) biosynthetic pathway. The protein is PqqA binding protein of Rhodopseudomonas palustris (strain TIE-1).